Reading from the N-terminus, the 365-residue chain is uncharacterized protein (365 aa).

G31–T38 lines the ATP pocket.

It belongs to the archaeal ATPase family.

This is an uncharacterized protein from Methanocaldococcus jannaschii (strain ATCC 43067 / DSM 2661 / JAL-1 / JCM 10045 / NBRC 100440) (Methanococcus jannaschii).